A 406-amino-acid polypeptide reads, in one-letter code: Putative competence-damage inducible protein (406 aa).

The protein belongs to the CinA family.

This is Putative competence-damage inducible protein from Natranaerobius thermophilus (strain ATCC BAA-1301 / DSM 18059 / JW/NM-WN-LF).